The following is a 298-amino-acid chain: Inosose dehydratase (298 aa).

It belongs to the IolE/MocC family. Requires glutathione as cofactor. Co(2+) serves as cofactor. It depends on Mn(2+) as a cofactor.

The enzyme catalyses scyllo-inosose = 3D-3,5/4-trihydroxycyclohexane-1,2-dione + H2O. Functionally, catalyzes the dehydration of inosose (2-keto-myo-inositol, 2KMI or 2,4,6/3,5-pentahydroxycyclohexanone) to 3D-(3,5/4)-trihydroxycyclohexane-1,2-dione (D-2,3-diketo-4-deoxy-epi-inositol). This chain is Inosose dehydratase, found in Serratia proteamaculans (strain 568).